The primary structure comprises 78 residues: Large ribosomal subunit protein uL29 (78 aa).

This sequence belongs to the universal ribosomal protein uL29 family.

This is Large ribosomal subunit protein uL29 from Rhodococcus opacus (strain B4).